We begin with the raw amino-acid sequence, 193 residues long: Putative manganese efflux pump MntP (193 aa).

Helical transmembrane passes span 3–23 (MYATLILALALSMDAFAASIC), 41–61 (LIFGLAEACTPLIGWSLGLYA), 65–85 (IIEWDHWVAFTLLFILGCRMI), 106–126 (IVLITTAIATSLDAMAIGIGL), 133–153 (IVHTAMAIGMMTMIMATLGML), and 169–189 (IGGLILIAIGFNILFEHLELF).

The protein belongs to the MntP (TC 9.B.29) family.

The protein resides in the cell inner membrane. In terms of biological role, probably functions as a manganese efflux pump. This is Putative manganese efflux pump MntP from Photorhabdus laumondii subsp. laumondii (strain DSM 15139 / CIP 105565 / TT01) (Photorhabdus luminescens subsp. laumondii).